A 457-amino-acid polypeptide reads, in one-letter code: Siroheme synthase (457 aa).

A precorrin-2 dehydrogenase /sirohydrochlorin ferrochelatase region spans residues 1–204 (MDHLPIFCQL…NDQKAITETT (204 aa)). NAD(+) is bound by residues 22-23 (DV) and 43-44 (LA). A Phosphoserine modification is found at S128. The interval 216-457 (GEVVLVGAGP…RDKLNWFSNH (242 aa)) is uroporphyrinogen-III C-methyltransferase. An S-adenosyl-L-methionine-binding site is contributed by P225. The Proton acceptor role is filled by D248. Residue K270 is the Proton donor of the active site. S-adenosyl-L-methionine contacts are provided by residues 301-303 (GGD), I306, 331-332 (TA), M382, and G411.

The protein in the N-terminal section; belongs to the precorrin-2 dehydrogenase / sirohydrochlorin ferrochelatase family. It in the C-terminal section; belongs to the precorrin methyltransferase family.

It carries out the reaction uroporphyrinogen III + 2 S-adenosyl-L-methionine = precorrin-2 + 2 S-adenosyl-L-homocysteine + H(+). The catalysed reaction is precorrin-2 + NAD(+) = sirohydrochlorin + NADH + 2 H(+). It catalyses the reaction siroheme + 2 H(+) = sirohydrochlorin + Fe(2+). It participates in cofactor biosynthesis; adenosylcobalamin biosynthesis; precorrin-2 from uroporphyrinogen III: step 1/1. Its pathway is cofactor biosynthesis; adenosylcobalamin biosynthesis; sirohydrochlorin from precorrin-2: step 1/1. It functions in the pathway porphyrin-containing compound metabolism; siroheme biosynthesis; precorrin-2 from uroporphyrinogen III: step 1/1. The protein operates within porphyrin-containing compound metabolism; siroheme biosynthesis; siroheme from sirohydrochlorin: step 1/1. It participates in porphyrin-containing compound metabolism; siroheme biosynthesis; sirohydrochlorin from precorrin-2: step 1/1. In terms of biological role, multifunctional enzyme that catalyzes the SAM-dependent methylations of uroporphyrinogen III at position C-2 and C-7 to form precorrin-2 via precorrin-1. Then it catalyzes the NAD-dependent ring dehydrogenation of precorrin-2 to yield sirohydrochlorin. Finally, it catalyzes the ferrochelation of sirohydrochlorin to yield siroheme. The protein is Siroheme synthase of Shigella dysenteriae serotype 1 (strain Sd197).